A 473-amino-acid polypeptide reads, in one-letter code: Ribulose bisphosphate carboxylase large chain (473 aa).

Substrate is bound by residues Asn-116 and Thr-166. The active-site Proton acceptor is Lys-168. Lys-170 is a substrate binding site. Mg(2+)-binding residues include Lys-194, Asp-196, and Glu-197. Lys-194 carries the N6-carboxylysine modification. Catalysis depends on His-287, which acts as the Proton acceptor. Substrate is bound by residues Arg-288, His-320, and Ser-372.

Belongs to the RuBisCO large chain family. Type I subfamily. As to quaternary structure, heterohexadecamer of 8 large chains and 8 small chains. Mg(2+) is required as a cofactor.

The enzyme catalyses 2 (2R)-3-phosphoglycerate + 2 H(+) = D-ribulose 1,5-bisphosphate + CO2 + H2O. It carries out the reaction D-ribulose 1,5-bisphosphate + O2 = 2-phosphoglycolate + (2R)-3-phosphoglycerate + 2 H(+). RuBisCO catalyzes two reactions: the carboxylation of D-ribulose 1,5-bisphosphate, the primary event in carbon dioxide fixation, as well as the oxidative fragmentation of the pentose substrate. Both reactions occur simultaneously and in competition at the same active site. The protein is Ribulose bisphosphate carboxylase large chain of Nitrosomonas europaea (strain ATCC 19718 / CIP 103999 / KCTC 2705 / NBRC 14298).